Here is a 980-residue protein sequence, read N- to C-terminus: Hypoxia up-regulated protein 1 (980 aa).

Positions Met-1–Ser-24 are cleaved as a signal peptide. Disordered regions lie at residues Glu-558–Val-682 and Lys-894–Leu-980. Composition is skewed to basic and acidic residues over residues Ala-599–Lys-656 and Lys-896–Ser-906. Residues Thr-907 to Thr-916 are compositionally biased toward polar residues. 2 stretches are compositionally biased toward basic and acidic residues: residues Asp-918–Glu-949 and Thr-960–Leu-980. The Prevents secretion from ER motif lies at Glu-977–Leu-980.

Belongs to the heat shock protein 70 family.

The protein localises to the endoplasmic reticulum lumen. Has a pivotal role in cytoprotective cellular mechanisms triggered by oxygen deprivation. May play a role as a molecular chaperone and participate in protein folding. The sequence is that of Hypoxia up-regulated protein 1 (hyou1) from Danio rerio (Zebrafish).